We begin with the raw amino-acid sequence, 484 residues long: Fork head protein homolog 1 (484 aa).

Residues 76–142 (VTIGRNTDSL…NGAKVNFRRI (67 aa)) enclose the FHA domain. The segment at residues 302–393 (IKPPQSYASM…RRDFLNKWNA (92 aa)) is a DNA-binding region (fork-head).

As to quaternary structure, interacts (via FHA domain) with ECM30, GLN3, URE2, MPH1 AND FDO1. Interacts with the origin recognition complex (ORC) composed of ORC1 to ORC6.

The protein resides in the nucleus. It is found in the cytoplasm. The protein localises to the cytosol. Transcription factor that regulates the expression of the CLB2 cluster of genes during the G2/M phase of the mitotic cell cycle. The CLB2 cluster of genes includes mitotic regulators such as CLB1, CLB2, CDC5 and CDC20 as well as SWI5 and ACE2, transcription factors required for the subsequent temporal wave of cell cycle regulated gene expression in the M/G1 phase interval. Involved in HMRa silencing. FKH1 and FKH2 associate with the coding regions of active genes and influence, in opposing ways, transcriptional elongation and termination, and coordinate early transcription elongation and pre-mRNA processing. Both FKH1 and FKH2 play a role as regulators of lifespan in collaboration with the anaphase-promoting complex (APC), likely through combined regulation of stress response, genomic stability, and cell cycle regulation. FKH1 and FKH2 function also in controlling yeast cell morphology by preventing preudohyphal growth. Acts as a rate-limiting replication origin activator via its interaction with the origin recognition complex (ORC). Plays a transcription-independent role in recombination donor preference during mating-type switching through binding to the recombination enhancer (RE), a 700-bp cis-acting element that controls recombination along the left arm of chromosome III. This Saccharomyces cerevisiae (strain ATCC 204508 / S288c) (Baker's yeast) protein is Fork head protein homolog 1.